The sequence spans 171 residues: uncharacterized protein (171 aa).

The segment at 123–171 is disordered; the sequence is CTKRDLRNDPPPAYQPDDPLKDLRKNFEKKEKPTWNDVEKKKNGVFEFH. The segment covering 140-171 has biased composition (basic and acidic residues); sequence DPLKDLRKNFEKKEKPTWNDVEKKKNGVFEFH.

This is an uncharacterized protein from Caenorhabditis elegans.